The primary structure comprises 66 residues: U1-theraphotoxin-Cg1a 2 (66 aa).

A signal peptide spans 1–21 (MKTSALFVIFGLVLLFCNSFA). A propeptide spanning residues 22 to 29 (AELEMTGR) is cleaved from the precursor. Disulfide bonds link C31-C46, C38-C51, and C45-C58. Position 63 is a proline amide (P63).

The protein belongs to the neurotoxin 10 (Hwtx-1) family. 46 (Jztx-7/10/12) subfamily. In terms of tissue distribution, expressed by the venom gland.

It localises to the secreted. Probable ion channel inhibitor. This chain is U1-theraphotoxin-Cg1a 2, found in Chilobrachys guangxiensis (Chinese earth tiger tarantula).